A 626-amino-acid chain; its full sequence is MIPMRKIKLLSPRLANQIAAGEVVERPSSVIKELLENSLDAGATRLDIEIEDGGIKLMRVRDNGGGIDKDDLPLALSRHATSKIYELDDLEAVATLGFRGEALASISSVARLALVSSTSEDSAGWQVVAEGRDMETQISPAPHPRGTTVEVRDLFFNTPARRKFLRSEKTEYTHLEDVVKRLALSRFDVAFNLRHNGRAIYAWRAGDSQLEQERRVAQVCGPAFMENAVFIEMERGSLRLWGWVAQPTFSRSQADLQHFYVNGRAIRDKLVSHAVRQAYQDVLYHGRHPAFVLYLELDPSTVDVNVHPTKHEVRFRDNRTVHDFIYSSLHHALAKVRPEDTLARKAADLGEDTPGIAPYAVSPRPLVEGIAAGEFKGQGAMSFAPSTSGGYRPGYTSVSPGTIREQMHTYGELLASAEPVTARALPQTPTEDIPPLGYALAQLKGIYILAENAQGLIVVDMHAAHERITYERMKAAYAHGGLQTQPLLVPESIAVSEKEADCAEQFADIFKTLGFELQRAGPETLLIRQLPVILNRAQAEQLVRDVLSDLIEHGTSERIQHHINEILATMACHGSVRANRKLTIPEMNALLRDMEATERSGQCNHGRPTWFLQSLDELDKLFMRGQ.

This sequence belongs to the DNA mismatch repair MutL/HexB family.

Functionally, this protein is involved in the repair of mismatches in DNA. It is required for dam-dependent methyl-directed DNA mismatch repair. May act as a 'molecular matchmaker', a protein that promotes the formation of a stable complex between two or more DNA-binding proteins in an ATP-dependent manner without itself being part of a final effector complex. The protein is DNA mismatch repair protein MutL of Cellvibrio japonicus (strain Ueda107) (Pseudomonas fluorescens subsp. cellulosa).